We begin with the raw amino-acid sequence, 59 residues long: MLNIFSLICLNSALHSSSFFFAKLPEAYAFFNPIVDVMPVIPVLFFLLALVWQAAVSFR.

Residues 1-22 (MLNIFSLICLNSALHSSSFFFA) constitute a propeptide that is removed on maturation. Residues 38-58 (MPVIPVLFFLLALVWQAAVSF) traverse the membrane as a helical segment.

Belongs to the PsbK family. PSII is composed of 1 copy each of membrane proteins PsbA, PsbB, PsbC, PsbD, PsbE, PsbF, PsbH, PsbI, PsbJ, PsbK, PsbL, PsbM, PsbT, PsbX, PsbY, PsbZ, Psb30/Ycf12, at least 3 peripheral proteins of the oxygen-evolving complex and a large number of cofactors. It forms dimeric complexes.

It is found in the plastid. The protein localises to the chloroplast thylakoid membrane. One of the components of the core complex of photosystem II (PSII). PSII is a light-driven water:plastoquinone oxidoreductase that uses light energy to abstract electrons from H(2)O, generating O(2) and a proton gradient subsequently used for ATP formation. It consists of a core antenna complex that captures photons, and an electron transfer chain that converts photonic excitation into a charge separation. The chain is Photosystem II reaction center protein K from Calycanthus floridus var. glaucus (Eastern sweetshrub).